Consider the following 194-residue polypeptide: uncharacterized protein (194 aa).

It to A.aeolicus AQ_423.

This is an uncharacterized protein from Aquifex aeolicus (strain VF5).